The following is a 208-amino-acid chain: MNRKQIAKGKLVRRFGINIFEQPKYDKILKKKPHPPGMHGKARKAKITEYGKQLIEKQKIKFTYGVSERQLTNTFKEAKKHHGVTGDNLLSILERRIDNVVYRAGFAISRAHARQIVSHGIIILNGRRVTIPSIILRANDQIQIKEKDSLKKLIRSNIEKTSSLRNLPTWIEVNADDLNIKVKHAPSRDEIPTLANEQMVVEYYSKRA.

Residues 95–157 enclose the S4 RNA-binding domain; the sequence is RRIDNVVYRA…DSLKKLIRSN (63 aa).

It belongs to the universal ribosomal protein uS4 family. As to quaternary structure, part of the 30S ribosomal subunit. Contacts protein S5. The interaction surface between S4 and S5 is involved in control of translational fidelity.

In terms of biological role, one of the primary rRNA binding proteins, it binds directly to 16S rRNA where it nucleates assembly of the body of the 30S subunit. Its function is as follows. With S5 and S12 plays an important role in translational accuracy. The polypeptide is Small ribosomal subunit protein uS4 (Borreliella burgdorferi (strain ATCC 35210 / DSM 4680 / CIP 102532 / B31) (Borrelia burgdorferi)).